The primary structure comprises 440 residues: C4-dicarboxylate transport protein (440 aa).

9 helical membrane passes run L7–Y29, M49–M66, A79–V101, V143–A165, V186–F208, L221–I243, V291–M313, I328–G350, and V355–I377. The interval G419–R440 is disordered.

Belongs to the dicarboxylate/amino acid:cation symporter (DAACS) (TC 2.A.23) family.

It is found in the cell inner membrane. In terms of biological role, responsible for the transport of dicarboxylates such as succinate, fumarate, and malate from the periplasm across the membrane. In Pseudomonas putida (strain ATCC 47054 / DSM 6125 / CFBP 8728 / NCIMB 11950 / KT2440), this protein is C4-dicarboxylate transport protein.